A 36-amino-acid polypeptide reads, in one-letter code: DNA binding protein ORF8 (36 aa).

The protein belongs to the microviridae J protein family.

Its subcellular location is the virion. It is found in the host cytoplasm. Mediates ssDNA packaging into virion, it locates to the internal surface of the capsid. Additionally, plays a role in viral attachment to the host cell. This is DNA binding protein ORF8 from Chlamydia phage 1 (Bacteriophage Chp1).